The chain runs to 440 residues: Glycerophosphocholine cholinephosphodiesterase ENPP6 (440 aa).

The signal sequence occupies residues 1-22; that stretch reads MAGKLWTFLLLFGFSWVWPASA. Substrate-binding residues include Asp-32, Ser-71, and Asn-92. Residues Asp-32 and Ser-71 each contribute to the Zn(2+) site. The active-site Nucleophile is Ser-71. Phosphoserine is present on Ser-71. Asn-100 and Asn-118 each carry an N-linked (GlcNAc...) asparagine glycan. A disulfide bond links Cys-142 and Cys-154. Position 193 (Asp-193) interacts with substrate. Positions 193, 197, 240, and 241 each coordinate Zn(2+). His-241 is a binding site for substrate. Asn-341 carries N-linked (GlcNAc...) asparagine glycosylation. His-354 contacts substrate. His-354 is a binding site for Zn(2+). N-linked (GlcNAc...) asparagine glycosylation occurs at Asn-404. The GPI-anchor amidated serine moiety is linked to residue Ser-419. The propeptide at 420–440 is removed in mature form; it reads SSPSIPPNSCALVLILLLYFV.

Belongs to the nucleotide pyrophosphatase/phosphodiesterase family. Homodimer; disulfide-linked. Homotetramer. Zn(2+) serves as cofactor.

The protein localises to the cell membrane. It catalyses the reaction sn-glycerol 3-phosphocholine + H2O = phosphocholine + glycerol + H(+). The enzyme catalyses a 1-acyl-sn-glycero-3-phosphocholine + H2O = a 1-acyl-sn-glycerol + phosphocholine + H(+). The catalysed reaction is a 1-O-alkyl-sn-glycero-3-phosphocholine + H2O = a 1-O-alkyl-sn-glycerol + phosphocholine + H(+). It carries out the reaction 1-dodecanoyl-sn-glycero-3-phosphocholine + H2O = 1-dodecanoyl-sn-glycerol + phosphocholine + H(+). It catalyses the reaction 1-hexadecanoyl-sn-glycero-3-phosphocholine + H2O = 1-hexadecanoyl-sn-glycerol + phosphocholine + H(+). The enzyme catalyses 1-(5Z,8Z,11Z,14Z-eicosatetraenoyl)-sn-glycero-3-phosphocholine + H2O = 1-(5Z,8Z,11Z,14Z-eicosatetraenoyl)-sn-glycerol + phosphocholine + H(+). The catalysed reaction is 1-tetradecanoyl-sn-glycero-3-phosphocholine + H2O = 1-tetradecanoyl-sn-glycerol + phosphocholine + H(+). It carries out the reaction sphing-4-enine-phosphocholine + H2O = sphing-4-enine + phosphocholine + H(+). It catalyses the reaction 1-(9Z-octadecenoyl)-sn-glycero-3-phosphocholine + H2O = 1-(9Z-octadecenoyl)-sn-glycerol + phosphocholine + H(+). The enzyme catalyses 1-(9Z,12Z)-octadecadienoyl-sn-glycero-3-phosphocholine + H2O = 1-(9Z,12Z-octadecadienoyl)-sn-glycerol + phosphocholine + H(+). The catalysed reaction is glycero-2-phosphocholine + H2O = phosphocholine + glycerol + H(+). With respect to regulation, inhibited by EDTA and EGTA in vitro. Functionally, choline-specific glycerophosphodiesterase that hydrolyzes glycerophosphocholine (GPC) and lysophosphatidylcholine (LPC) and contributes to supplying choline to the cells. Has a preference for LPC with short (12:0 and 14:0) or polyunsaturated (18:2 and 20:4) fatty acids. In vitro, hydrolyzes only choline-containing lysophospholipids, such as sphingosylphosphorylcholine (SPC), platelet-activating factor (PAF) and lysoPAF, but not other lysophospholipids. This chain is Glycerophosphocholine cholinephosphodiesterase ENPP6, found in Rattus norvegicus (Rat).